Here is a 332-residue protein sequence, read N- to C-terminus: Acetyl-coenzyme A carboxylase carboxyl transferase subunit beta (332 aa).

In terms of domain architecture, CoA carboxyltransferase N-terminal spans 24-293; it reads LWIKCPDSGH…PEVIVESEPE (270 aa). Positions 288 to 332 are disordered; sequence VESEPEPEPEPVVAEIIPPTSDLPVSAPAPAPVAAQTPAPAAPSA. Residues 298–332 are compositionally biased toward low complexity; that stretch reads PVVAEIIPPTSDLPVSAPAPAPVAAQTPAPAAPSA.

This sequence belongs to the AccD/PCCB family. Acetyl-CoA carboxylase is a heterohexamer composed of biotin carboxyl carrier protein (AccB), biotin carboxylase (AccC) and two subunits each of ACCase subunit alpha (AccA) and ACCase subunit beta (AccD).

The protein resides in the cytoplasm. The enzyme catalyses N(6)-carboxybiotinyl-L-lysyl-[protein] + acetyl-CoA = N(6)-biotinyl-L-lysyl-[protein] + malonyl-CoA. It participates in lipid metabolism; malonyl-CoA biosynthesis; malonyl-CoA from acetyl-CoA: step 1/1. Component of the acetyl coenzyme A carboxylase (ACC) complex. Biotin carboxylase (BC) catalyzes the carboxylation of biotin on its carrier protein (BCCP) and then the CO(2) group is transferred by the transcarboxylase to acetyl-CoA to form malonyl-CoA. The sequence is that of Acetyl-coenzyme A carboxylase carboxyl transferase subunit beta from Rhodopseudomonas palustris (strain BisB18).